A 237-amino-acid chain; its full sequence is IVGGTDAVLGEFPYQLSFQETFLGFSFHFCGASIYNENYAITAGHCVYGDDYENPSGLQIVAGELDMSVNEGSEQTITVSKIILHENFDYDLLDNDISLLKLSGSLTFNNNVAPIALPAQGHTATGNVIVTGWGTTSEGGNTPDVLQKVTVPLVSDAECRDDYGADEIFDSMICAGVPEGGKDSCQGDSGGPLAASDTGSTYLAGIVSWGYGCARPGYPGVYTEVSYHVDWIKANAV.

A Peptidase S1 domain is found at 1 to 237 (IVGGTDAVLG…HVDWIKANAV (237 aa)). A disulfide bridge links C30 with C46. Residue H45 is the Charge relay system of the active site. Ca(2+) contacts are provided by E64, V69, and E74. The Charge relay system role is filled by D96. 2 disulfides stabilise this stretch: C159/C174 and C185/C213. The active-site Charge relay system is S189.

The protein belongs to the peptidase S1 family. It depends on Ca(2+) as a cofactor.

It is found in the secreted. It localises to the extracellular space. The catalysed reaction is Preferential cleavage: Arg-|-Xaa, Lys-|-Xaa.. The polypeptide is Trypsin-1 (Astacus astacus (Noble crayfish)).